Reading from the N-terminus, the 336-residue chain is USG-1 protein homolog (336 aa).

The protein belongs to the aspartate-semialdehyde dehydrogenase family.

This chain is USG-1 protein homolog (usg), found in Azotobacter vinelandii.